Here is a 231-residue protein sequence, read N- to C-terminus: Regulatory protein VanRc (231 aa).

The Response regulatory domain occupies 4–117 (KIVVVDDEKE…EVVARVKTQL (114 aa)). D53 carries the 4-aspartylphosphate modification. The ompR/PhoB-type DNA-binding region spans 132–231 (VEEYEKDGLI…VWGVGYIIEK (100 aa)).

Post-translationally, phosphorylated by VanSc.

It is found in the cytoplasm. Functionally, member of the two-component regulatory system VanSc/VanRc. Binds to the promoter regions of target genes. Activates the transcription of vanC1 and vanXYC in response to vancomycin which results in vancomycin resistance. The sequence is that of Regulatory protein VanRc from Enterococcus gallinarum.